Reading from the N-terminus, the 908-residue chain is NADH-quinone oxidoreductase subunit G (908 aa).

The 82-residue stretch at 2-83 (ATIHVDGKEY…GTFISIDDEE (82 aa)) folds into the 2Fe-2S ferredoxin-type domain. Residues Cys-34, Cys-45, Cys-48, and Cys-67 each contribute to the [2Fe-2S] cluster site. Positions 83 to 122 (EAKQFRESVVEWLMTNHPHDCPVCEEGGNCHLQDMTVMTG) constitute a 4Fe-4S His(Cys)3-ligated-type domain. Positions 99, 103, 106, 112, 151, 154, 157, 201, 228, 231, 235, and 263 each coordinate [4Fe-4S] cluster. The region spanning 221–277 (MQFAPSICQQCSIGCNISPGERYGELRRIENRYNGTVNHYFLCDRGRFGYGYVNLKD) is the 4Fe-4S Mo/W bis-MGD-type domain.

This sequence belongs to the complex I 75 kDa subunit family. In terms of assembly, composed of 13 different subunits. Subunits NuoCD, E, F, and G constitute the peripheral sector of the complex. Requires [2Fe-2S] cluster as cofactor. [4Fe-4S] cluster serves as cofactor.

It carries out the reaction a quinone + NADH + 5 H(+)(in) = a quinol + NAD(+) + 4 H(+)(out). Its function is as follows. NDH-1 shuttles electrons from NADH, via FMN and iron-sulfur (Fe-S) centers, to quinones in the respiratory chain. The immediate electron acceptor for the enzyme in this species is believed to be ubiquinone. Couples the redox reaction to proton translocation (for every two electrons transferred, four hydrogen ions are translocated across the cytoplasmic membrane), and thus conserves the redox energy in a proton gradient. The chain is NADH-quinone oxidoreductase subunit G (nuoG) from Salmonella typhi.